The sequence spans 453 residues: Signal recognition particle protein (453 aa).

Residues 107–114, 190–194, and 248–251 each bind GTP; these read GLQGAGKT, DTAGR, and TKVD.

This sequence belongs to the GTP-binding SRP family. SRP54 subfamily. In terms of assembly, part of the signal recognition particle protein translocation system, which is composed of SRP and FtsY. SRP is a ribonucleoprotein composed of Ffh and a 4.5S RNA molecule.

It is found in the cytoplasm. The enzyme catalyses GTP + H2O = GDP + phosphate + H(+). Functionally, involved in targeting and insertion of nascent membrane proteins into the cytoplasmic membrane. Binds to the hydrophobic signal sequence of the ribosome-nascent chain (RNC) as it emerges from the ribosomes. The SRP-RNC complex is then targeted to the cytoplasmic membrane where it interacts with the SRP receptor FtsY. Interaction with FtsY leads to the transfer of the RNC complex to the Sec translocase for insertion into the membrane, the hydrolysis of GTP by both Ffh and FtsY, and the dissociation of the SRP-FtsY complex into the individual components. This is Signal recognition particle protein from Escherichia coli O157:H7.